Here is a 198-residue protein sequence, read N- to C-terminus: Superoxide dismutase [Mn], mitochondrial (198 aa).

His26 is a Mn(2+) binding site. A 3'-nitrotyrosine modification is found at Tyr34. 2 positions are modified to N6-acetyllysine; alternate: Lys44 and Lys51. 2 positions are modified to N6-succinyllysine; alternate: Lys44 and Lys51. A Mn(2+)-binding site is contributed by His74. An N6-acetyllysine modification is found at Lys90. N6-acetyllysine; alternate occurs at positions 98 and 106. N6-succinyllysine; alternate occurs at positions 98 and 106. 2 residues coordinate Mn(2+): Asp159 and His163. Position 178 is an N6-acetyllysine (Lys178).

The protein belongs to the iron/manganese superoxide dismutase family. Homotetramer. Mn(2+) serves as cofactor. Post-translationally, nitrated under oxidative stress. Nitration coupled with oxidation inhibits the catalytic activity. Acetylation at Lys-98 decreases enzymatic activity. Deacetylated by SIRT3 upon exposure to ionizing radiations or after long fasting. In terms of processing, polyubiquitinated; leading to proteasomal degradation. Deubiquitinated by USP36 which increases protein stability.

It is found in the mitochondrion matrix. It catalyses the reaction 2 superoxide + 2 H(+) = H2O2 + O2. Its function is as follows. Destroys superoxide anion radicals which are normally produced within the cells and which are toxic to biological systems. The sequence is that of Superoxide dismutase [Mn], mitochondrial (SOD2) from Macaca fuscata fuscata (Japanese macaque).